A 506-amino-acid chain; its full sequence is MEAAVAAAAAAAGAVTTAVAPPPGAAVSNGVATAPPPFLMKTYEMVDDPATDAVVSWGPGNNSFVVWNTPEFARDLLPKYFKHSNFSSFVRQLNTYGFRKVDPDRWEFANEGFLRGQKHLLKTINRRKPTHGNNQVQQPQLPAAPVPACVEVGKFGMEEEIEMLKRDKNVLMQELVRLRQQQQTTDHQLQTLGKRLQGMEQRQQQMMSFLAKAMHSPGFLAQFVQQNENSRRRIVASNKKRRLPKQDGSLDSESASLDGQIVKYQPMINEAAKAMLRKILKLDSSHRFESMGNSDNFLLENYMPNGQGLDSSSSTRNSGVTLAEVPANSGLPYVATSSGLSAICSTSTPQIQCPVVLDNGIPKEVPNMSAVPSVPKAVAPGPTDINILEFPDLQDIVAEENVDIPGGGFEMPGPEGVFSLPEEGDDSVPIETDEILYNDDTQKLPAIIDSFWEQFLVASPLSVDNDEVDSGVLDQKETQQGNGWTKAENMANLTEQMGLLSSHHTG.

Residues 157 to 207 are a coiled coil; it reads MEEEIEMLKRDKNVLMQELVRLRQQQQTTDHQLQTLGKRLQGMEQRQQQMM. A hydrophobic repeat HR-A/B region spans residues 164–214; that stretch reads LKRDKNVLMQELVRLRQQQQTTDHQLQTLGKRLQGMEQRQQQMMSFLAKAM. Residues 231–254 are disordered; that stretch reads RRRIVASNKKRRLPKQDGSLDSES. Residues 232-243 show a composition bias toward basic residues; it reads RRIVASNKKRRL. Residues 239–242 carry the Nuclear localization signal motif; the sequence is KKRR. Residues 449-456 carry the AHA motif; sequence DSFWEQFL.

The protein belongs to the HSF family. Class A subfamily. In terms of assembly, homotrimer. Exhibits temperature-dependent phosphorylation.

The protein localises to the nucleus. In terms of biological role, transcriptional regulator that specifically binds DNA of heat shock promoter elements (HSE). In Oryza sativa subsp. japonica (Rice), this protein is Heat stress transcription factor A-1 (HSFA1).